We begin with the raw amino-acid sequence, 390 residues long: Ammonium/H(+) antiporter subunit AmhT (390 aa).

A run of 10 helical transmembrane segments spans residues 2 to 22, 31 to 51, 52 to 72, 94 to 114, 143 to 163, 178 to 198, 212 to 232, 266 to 286, 288 to 308, and 351 to 371; these read VIPE…TGFV, VVIF…SHLL, HFAG…EFPL, FGVT…SLII, FMLG…AVLV, LLVV…VFLF, DLFI…ALYL, LLLP…EGIP, IPLL…VGVL, and VFIL…PSIA.

Belongs to the monovalent cation:proton antiporter 2 (CPA2) transporter (TC 2.A.37) family. In terms of assembly, interacts with AmhM.

It localises to the cell membrane. Its activity is regulated as follows. AmhT alone exhibits antiport activity, but interaction with AmhM confers different properties, such as higher KM for potassium. Functionally, ammonium/proton antiporter that mediates the efflux of ammonium ions. Can also transport potassium or rubidium, but not sodium or lithium. The chain is Ammonium/H(+) antiporter subunit AmhT (amhT) from Alkalihalophilus pseudofirmus (strain ATCC BAA-2126 / JCM 17055 / OF4) (Bacillus pseudofirmus).